The chain runs to 412 residues: Multifunctional CCA protein (412 aa).

2 residues coordinate ATP: glycine 8 and arginine 11. Glycine 8 and arginine 11 together coordinate CTP. 2 residues coordinate Mg(2+): aspartate 21 and aspartate 23. 3 residues coordinate ATP: arginine 91, arginine 137, and arginine 140. Arginine 91, arginine 137, and arginine 140 together coordinate CTP. One can recognise an HD domain in the interval 228 to 329 (TGIHTMMVLA…LKVFDKADAW (102 aa)).

This sequence belongs to the tRNA nucleotidyltransferase/poly(A) polymerase family. Bacterial CCA-adding enzyme type 1 subfamily. Monomer. Can also form homodimers and oligomers. Mg(2+) serves as cofactor. It depends on Ni(2+) as a cofactor.

It carries out the reaction a tRNA precursor + 2 CTP + ATP = a tRNA with a 3' CCA end + 3 diphosphate. The catalysed reaction is a tRNA with a 3' CCA end + 2 CTP + ATP = a tRNA with a 3' CCACCA end + 3 diphosphate. In terms of biological role, catalyzes the addition and repair of the essential 3'-terminal CCA sequence in tRNAs without using a nucleic acid template. Adds these three nucleotides in the order of C, C, and A to the tRNA nucleotide-73, using CTP and ATP as substrates and producing inorganic pyrophosphate. tRNA 3'-terminal CCA addition is required both for tRNA processing and repair. Also involved in tRNA surveillance by mediating tandem CCA addition to generate a CCACCA at the 3' terminus of unstable tRNAs. While stable tRNAs receive only 3'-terminal CCA, unstable tRNAs are marked with CCACCA and rapidly degraded. In Aeromonas hydrophila subsp. hydrophila (strain ATCC 7966 / DSM 30187 / BCRC 13018 / CCUG 14551 / JCM 1027 / KCTC 2358 / NCIMB 9240 / NCTC 8049), this protein is Multifunctional CCA protein.